Reading from the N-terminus, the 402-residue chain is 26S proteasome non-ATPase regulatory subunit 4 homolog (402 aa).

The VWFA domain occupies 5–189; the sequence is ATMICIDNSE…LSDVLISTPI (185 aa). In terms of domain architecture, UIM 1 spans 221–240; that stretch reads NVDPELALALRLSMEEERAR. The segment covering 241-261 has biased composition (basic and acidic residues); it reads QEAIAKKAAEESSGAENKDHA. Disordered regions lie at residues 241–292 and 302–321; these read QEAI…EDDD and MSME…MAEA. UIM domains lie at 291-310 and 323-342; these read DDAQ…GSSG and VDDQ…AGGS. The tract at residues 363 to 402 is disordered; sequence SLPGVDPNDPSVKDLLASLHGQGEQEKKEDKSDKPEDEKK. Over residues 385–402 the composition is skewed to basic and acidic residues; sequence GEQEKKEDKSDKPEDEKK.

The protein belongs to the proteasome subunit S5A family. As to quaternary structure, component of the 19S regulatory particle (RP/PA700) base subcomplex of the 26S proteasome. The 26S proteasome is composed of a core protease (CP), known as the 20S proteasome, capped at one or both ends by the 19S regulatory particle (RP/PA700). The RP/PA700 complex is composed of at least 17 different subunits in two subcomplexes, the base and the lid, which form the portions proximal and distal to the 20S proteolytic core, respectively. Interacts with PI4KG4.

In terms of biological role, plays a role in maintaining the structural integrity of the 19S regulatory particle (RP), subcomplex of the 26S proteasome. Plays a major role in both the direct and indirect recognition of ubiquitinated substrates of ubiquitin/26S proteasome-mediated proteolysis (UPP). Binds and presumably selects ubiquitin-conjugates for destruction. The chain is 26S proteasome non-ATPase regulatory subunit 4 homolog from Oryza sativa subsp. japonica (Rice).